A 486-amino-acid polypeptide reads, in one-letter code: MSNNFKDDFEKNRQSIDTNSHQDHTEDVEKDQSELEHQDTIENTEQQFPPRNAQRRKRRRDLATNHNKQVHNESQTSEDNVQNEAGTIDDRQVESSHSTESQEPSHQDSTPQHEEEYYNKNAFAMDKSHPEPIEDNDKHETIKDAENNTEHSTVSDKSIAEQSQQPKPYFATGANQANTSKDKHDDVTVKQDKDESKDHHSGKKGAAIGAGTAGVAGAAGAMGVSKAKKHSNDAQNKSNSDKSNNSTEDKASQDKSKDHHNGKKGAAIGAGTAGLAGGAASKSASAASKPHASNNASQNHDEHDNHDRDKERKKGGMAKVLLPLIAAVLIIGALAIFGGMALNNHNNGTKENKIANTNKNNADESKDKDTSKDASKDKSKSTDSDKSKEDQDKATKDESDNDQNNANQANNQAQNNQNQQQANQNQQQQQQRQGGGQRHTVNGQENLYRIAIQYYGSGSPENVEKIRRANGLSGNNIRNGQQIVIP.

Residues Met1–Thr40 are compositionally biased toward basic and acidic residues. The disordered stretch occupies residues Met1–Lys314. Residues Ser2–Lys204 lie on the Extracellular side of the membrane. The tract at residues Gln14–Glu34 is elastin-binding. Positions Thr64 to Ala85 are enriched in polar residues. 2 stretches are compositionally biased toward basic and acidic residues: residues Glu103–Tyr118 and Asp126–Thr149. Over residues Glu150 to Pro166 the composition is skewed to polar residues. The segment covering Ser180 to His199 has biased composition (basic and acidic residues). 2 stretches are compositionally biased toward low complexity: residues Lys204 to Ser225 and Asp233 to Ser246. Residues Gly205–Ser225 form a helical membrane-spanning segment. At Lys226–Lys319 the chain is on the cytoplasmic side. Residues Thr247–His259 are compositionally biased toward basic and acidic residues. Residues Gly278–Ser297 show a composition bias toward low complexity. The span at Asn299–Lys314 shows a compositional bias: basic and acidic residues. A helical membrane pass occupies residues Val320–Met340. The Extracellular portion of the chain corresponds to Ala341–Pro486. Residues Glu351–Thr440 are disordered. The span at Asn361 to Glu398 shows a compositional bias: basic and acidic residues. Residues Gln403–Gln431 show a composition bias toward low complexity. Residues Gln437–Ile485 enclose the LysM domain.

It is found in the cell membrane. Its function is as follows. Promotes binding of soluble elastin peptides and tropoelastin to S.aureus cells although it is not able to promote bacterial adherence to immobilized elastin and, therefore, is not a microbial surface component recognizing adhesive matrix molecule (MSCRAMM). The sequence is that of Elastin-binding protein EbpS (ebpS) from Staphylococcus aureus (strain Mu50 / ATCC 700699).